The primary structure comprises 327 residues: Malate dehydrogenase (327 aa).

Glycine 12–alanine 18 is a binding site for NAD(+). Positions 93 and 99 each coordinate substrate. NAD(+) is bound by residues asparagine 106, glutamine 113, and valine 130 to asparagine 132. Residues asparagine 132 and arginine 163 each contribute to the substrate site. Residue histidine 188 is the Proton acceptor of the active site.

It belongs to the LDH/MDH superfamily. MDH type 2 family.

It carries out the reaction (S)-malate + NAD(+) = oxaloacetate + NADH + H(+). Catalyzes the reversible oxidation of malate to oxaloacetate. The chain is Malate dehydrogenase from Burkholderia mallei (strain NCTC 10247).